Consider the following 185-residue polypeptide: Neuronal vesicle trafficking-associated protein 1 (185 aa).

At 1–82 (MVKLGNNFAE…ITEGVTERFK (82 aa)) the chain is on the cytoplasmic side. A helical; Signal-anchor for type II membrane protein membrane pass occupies residues 83–103 (VSVLVLFALAFLTCVVFLVVY). Over 104–185 (KVYKYDRACP…QETEAAEKSA (82 aa)) the chain is Lumenal. Residues 129–164 (ESYYTEQDSSAREKFYTVINHYNVAKQSITRSVSPW) form a required for GRIP1 interaction region.

The protein belongs to the NSG family. Forms a complex with GRIP1, GRIA2 and STX12 through direct interaction with GRIP1; controls the intracellular fate of AMPAR and the endosomal sorting of the GRIA2 subunit toward recycling and membrane targeting. Interacts with STX12. Interacts with APP; could regulate APP processing. Interacts with FAM171A1. In terms of tissue distribution, pituitary and less in adrenal gland and testis. Expressed in the hippocampus throughout development. At P0, highly and broadly expressed throughout the cortical plate, but is down-regulated overall at P8 and P14, but remains relatively enriched in layer V. At P0 is expressed ubiquitously in the developing cerebellum namely Purkinje neurons as well as granule neurons. However, it becomes restricted to Purkinje cells by P8. This exclusive expression in Purkinje cells is maintained throughout adulthood.

The protein localises to the membrane. The protein resides in the golgi apparatus. Its subcellular location is the trans-Golgi network membrane. It is found in the endosome membrane. It localises to the cell projection. The protein localises to the dendrite. The protein resides in the early endosome membrane. Its subcellular location is the late endosome membrane. It is found in the lysosome lumen. It localises to the recycling endosome membrane. The protein localises to the cytoplasmic vesicle membrane. The protein resides in the golgi stack membrane. Its subcellular location is the endosome. It is found in the multivesicular body membrane. It localises to the endoplasmic reticulum membrane. In terms of biological role, plays a role in the recycling mechanism in neurons of multiple receptors, including AMPAR, APP and L1CAM and acts at the level of early endosomes to promote sorting of receptors toward a recycling pathway. Regulates sorting and recycling of GRIA2 through interaction with GRIP1 and then contributes to the regulation of synaptic transmission and plasticity by affecting the recycling and targeting of AMPA receptors to the synapse. Is required for faithful sorting of L1CAM to axons by facilitating trafficking from somatodendritic early endosome or the recycling endosome. In an other hand, induces apoptosis via the activation of CASP3 in response to DNA damage. This is Neuronal vesicle trafficking-associated protein 1 from Mus musculus (Mouse).